The chain runs to 227 residues: DNA packaging ATPase P9 (227 aa).

Residue 16–23 (GKTGTGKT) coordinates ATP.

In terms of assembly, heterodimer of P6 and P9; further multimerizes as hexamers of heterodimers. Part of the dodecameric portal complex that is composed of the packaging efficiency factor P6, the DNA packaging ATPase P9, and the internal heterododecamer P20/P22 which spans the virion inner membrane.

It is found in the virion. Functionally, together with the packaging efficiency factor P6, forms the external part of the portal vertex that is embeded in the capsid and which plays critical roles in genome packaging and genome ejection. Both proteins multimerize as a single ring-shaped heterdodecamer arranged around a central channel. This chain is DNA packaging ATPase P9 (IX), found in Enterobacteria phage PRD1 (Bacteriophage PRD1).